The primary structure comprises 417 residues: UDP-N-acetylglucosamine 1-carboxyvinyltransferase (417 aa).

22 to 23 (KN) provides a ligand contact to phosphoenolpyruvate. Residue arginine 93 coordinates UDP-N-acetyl-alpha-D-glucosamine. The active-site Proton donor is cysteine 117. Cysteine 117 carries the post-translational modification 2-(S-cysteinyl)pyruvic acid O-phosphothioketal. UDP-N-acetyl-alpha-D-glucosamine is bound by residues 122-126 (RPVDQ), aspartate 305, and isoleucine 327.

It belongs to the EPSP synthase family. MurA subfamily.

It is found in the cytoplasm. It carries out the reaction phosphoenolpyruvate + UDP-N-acetyl-alpha-D-glucosamine = UDP-N-acetyl-3-O-(1-carboxyvinyl)-alpha-D-glucosamine + phosphate. Its pathway is cell wall biogenesis; peptidoglycan biosynthesis. In terms of biological role, cell wall formation. Adds enolpyruvyl to UDP-N-acetylglucosamine. The protein is UDP-N-acetylglucosamine 1-carboxyvinyltransferase of Nitrosomonas europaea (strain ATCC 19718 / CIP 103999 / KCTC 2705 / NBRC 14298).